A 529-amino-acid polypeptide reads, in one-letter code: Beta-glucosidase 11 (529 aa).

Positions 1 to 25 (MAVAGAMVMSGALLLLHLLAFTCVA) are cleaved as a signal peptide. A beta-D-glucoside is bound by residues Q54, H157, and 202–203 (NE). E203 acts as the Proton donor in catalysis. An intrachain disulfide couples C222 to C230. A beta-D-glucoside is bound at residue Y346. N361 carries an N-linked (GlcNAc...) asparagine glycan. A beta-D-glucoside is bound at residue E417. Catalysis depends on E417, which acts as the Nucleophile. A glycan (N-linked (GlcNAc...) asparagine) is linked at N425. A beta-D-glucoside is bound by residues W466, 473–474 (EW), and F482.

Belongs to the glycosyl hydrolase 1 family.

The enzyme catalyses Hydrolysis of terminal, non-reducing beta-D-glucosyl residues with release of beta-D-glucose.. This Oryza sativa subsp. japonica (Rice) protein is Beta-glucosidase 11 (BGLU11).